The following is a 281-amino-acid chain: Urease accessory protein UreD (281 aa).

The protein belongs to the UreD family. UreD, UreF and UreG form a complex that acts as a GTP-hydrolysis-dependent molecular chaperone, activating the urease apoprotein by helping to assemble the nickel containing metallocenter of UreC. The UreE protein probably delivers the nickel.

It localises to the cytoplasm. In terms of biological role, required for maturation of urease via the functional incorporation of the urease nickel metallocenter. This chain is Urease accessory protein UreD, found in Pseudomonas savastanoi pv. phaseolicola (strain 1448A / Race 6) (Pseudomonas syringae pv. phaseolicola (strain 1448A / Race 6)).